Consider the following 595-residue polypeptide: S-(+)-linalool synthase, chloroplastic (595 aa).

A chloroplast-targeting transit peptide spans 1–46 (MVCHVFSSFSSSLIRVLEAPLLLPAASASSSSSSSPASRSGGRRRR). The span at 27–40 (SASSSSSSSPASRS) shows a compositional bias: low complexity. Positions 27-54 (SASSSSSSSPASRSGGRRRRAAHVRPSP) are disordered. Residues arginine 309, aspartate 346, aspartate 350, arginine 487, and aspartate 490 each coordinate (2E)-geranyl diphosphate. Mg(2+)-binding residues include aspartate 346 and aspartate 350. A DDXXD motif motif is present at residues 346-350 (DDIFD). Mg(2+)-binding residues include aspartate 490, serine 494, and glutamate 498.

The protein belongs to the terpene synthase family. Tpsb subfamily. Requires Mg(2+) as cofactor. It depends on Mn(2+) as a cofactor.

The protein resides in the plastid. It is found in the chloroplast. The enzyme catalyses (2E)-geranyl diphosphate + H2O = (S)-linalool + diphosphate. It participates in secondary metabolite biosynthesis; terpenoid biosynthesis. Its function is as follows. Involved in monoterpene (C10) biosynthesis. The major product is S-(+)-linalool. Linalool production is induced by jasmonate in response to pathogen attack, it possesses antibacterial activity and is important for resistance to the bacterial blight pathogen Xanthomonas oryzae pv. oryzae (Xoo). Plants over-expressing linalool synthase display enhanced resistance to Xoo. This Oryza sativa subsp. japonica (Rice) protein is S-(+)-linalool synthase, chloroplastic.